We begin with the raw amino-acid sequence, 360 residues long: Inward rectifier potassium channel 13 (360 aa).

Topologically, residues 1 to 50 (MDSSNCKVNAPLLSQRHRRMVTKDGHSTLQMDGAQRGLVYLRDAWGILMD) are cytoplasmic. A helical membrane pass occupies residues 51–77 (MRWRWMMLVFSASFVVHWLVFAVLWYA). At 78-105 (VAEMNGDLEIDHDVPPENHTICVKHITS) the chain is on the extracellular side. Residues 106–122 (FTAAFSFSLETQLTIGY) constitute an intramembrane region (helical; Pore-forming). The Selectivity filter signature appears at 119–124 (TIGYGT). Over 123–131 (GTMFPSGDC) the chain is Extracellular. The chain crosses the membrane as a helical span at residues 132-157 (PSAIALLAIQMLLGLMLEAFITGAFV). Residues 158 to 360 (AKIARPKNRA…FQIAETGLTE (203 aa)) are Cytoplasmic-facing. At Ser287 the chain carries Phosphoserine; by PKA.

It belongs to the inward rectifier-type potassium channel (TC 1.A.2.1) family. KCNJ13 subfamily. As to quaternary structure, homotetramer. Interacts with RAB28; the interaction may facilitate cone outer segments phagocytosis. Phosphorylation at Ser-287 by PKA increases ionic currents. In terms of tissue distribution, expressed in retina.

Its subcellular location is the membrane. It is found in the cell membrane. The catalysed reaction is K(+)(in) = K(+)(out). Inhibited by Ba(2+) and Cs(+), although sensitivity to those inhibitors is much lower than in other Kir channels. Its function is as follows. Inward rectifier potassium channels are characterized by a greater tendency to allow potassium to flow into the cell rather than out of it. Their voltage dependence is regulated by the concentration of extracellular potassium; as external potassium is raised, the voltage range of the channel opening shifts to more positive voltages. The inward rectification is mainly due to the blockage of outward current by internal magnesium. KCNJ13 has a very low single channel conductance, low sensitivity to block by external barium and cesium, and no dependence of its inward rectification properties on the internal blocking particle magnesium. The sequence is that of Inward rectifier potassium channel 13 from Mus musculus (Mouse).